The chain runs to 334 residues: Biotin synthase (334 aa).

The 226-residue stretch at 55–280 (EEIEVEGIIS…HTMLRFAGGR (226 aa)) folds into the Radical SAM core domain. Cysteine 70, cysteine 74, and cysteine 77 together coordinate [4Fe-4S] cluster. 3 residues coordinate [2Fe-2S] cluster: cysteine 113, cysteine 205, and arginine 275.

This sequence belongs to the radical SAM superfamily. Biotin synthase family. In terms of assembly, homodimer. The cofactor is [4Fe-4S] cluster. Requires [2Fe-2S] cluster as cofactor.

It catalyses the reaction (4R,5S)-dethiobiotin + (sulfur carrier)-SH + 2 reduced [2Fe-2S]-[ferredoxin] + 2 S-adenosyl-L-methionine = (sulfur carrier)-H + biotin + 2 5'-deoxyadenosine + 2 L-methionine + 2 oxidized [2Fe-2S]-[ferredoxin]. It participates in cofactor biosynthesis; biotin biosynthesis; biotin from 7,8-diaminononanoate: step 2/2. Functionally, catalyzes the conversion of dethiobiotin (DTB) to biotin by the insertion of a sulfur atom into dethiobiotin via a radical-based mechanism. This chain is Biotin synthase, found in Corynebacterium glutamicum (strain ATCC 13032 / DSM 20300 / JCM 1318 / BCRC 11384 / CCUG 27702 / LMG 3730 / NBRC 12168 / NCIMB 10025 / NRRL B-2784 / 534).